Reading from the N-terminus, the 846-residue chain is Arsenate respiratory reductase molybdopterin-containing subunit ArrA (846 aa).

A signal peptide (tat-type signal) is located at residues 1 to 29; that stretch reads MRIKRREFLKASAAVGAVAVASPTLNAFA. Positions 43–99 constitute a 4Fe-4S Mo/W bis-MGD-type domain; the sequence is GKWIPSTCQGCTTWCPVEFLFRMAVRSKYAATQLSKANNGYCCVRGHLMLQQLYDPD. Residues cysteine 50, cysteine 53, cysteine 57, and cysteine 85 each contribute to the [4Fe-4S] cluster site. Arginine 155 provides a ligand contact to arsenite. Tyrosine 156 serves as a coordination point for arsenate. Histidine 179 contributes to the arsenite binding site. Serine 180 lines the arsenate pocket. Cysteine 183 is a Mo-bis(molybdopterin guanine dinucleotide) binding site. Residue lysine 188 participates in arsenate binding. Residue tyrosine 200 participates in arsenite binding.

It belongs to the prokaryotic molybdopterin-containing oxidoreductase family. Heterodimer composed of one large subunit (ArrA) and one small subunit (ArrB). [4Fe-4S] cluster serves as cofactor. The cofactor is Mo-bis(molybdopterin guanine dinucleotide). Post-translationally, predicted to be exported by the Tat system. The position of the signal peptide cleavage has been experimentally proven.

The protein resides in the periplasm. It carries out the reaction arsenite + A + H2O = arsenate + AH2 + H(+). Component of the arsenate respiratory reductase (Arr) complex, which catalyzes the reduction of arsenate (As(V)) to arsenite (As(III)). Can use acetate as the electron donor. ArrA is the arsenate-binding subunit. This chain is Arsenate respiratory reductase molybdopterin-containing subunit ArrA, found in Chrysiogenes arsenatis.